Reading from the N-terminus, the 299-residue chain is Methylsterol monooxygenase 1-2 (299 aa).

3 helical membrane passes run 39-59, 96-116, and 118-138; these read CHNILFLFLIFSLVPLPLVFI, FILVVGPLQLVSYPSIQMIEI, and SGLPLPSCMEIVAQLVVYFLV. The Fatty acid hydroxylase domain occupies 132-267; that stretch reads LVVYFLVEDY…FTYCDYIYGT (136 aa). Residues 147–151 carry the Histidine box-1 motif; it reads HRFFH. The Histidine box-2 motif lies at 160 to 164; the sequence is HHIHH. Residues 189–209 traverse the membrane as a helical segment; the sequence is TFLGPAIAPGHMITFWLWIAL. Positions 239–245 match the Histidine box-3 motif; the sequence is YHDYHHY.

It belongs to the sterol desaturase family. As to quaternary structure, interacts with ACBP1. Requires Fe cation as cofactor. In terms of tissue distribution, expressed in embryo sacs, pollen and trichomes. Observed in leaves, roots, siliques and flowers.

The protein resides in the endoplasmic reticulum membrane. It catalyses the reaction 4,4-dimethyl-5alpha-cholest-7-en-3beta-ol + 6 Fe(II)-[cytochrome b5] + 3 O2 + 5 H(+) = 4alpha-carboxy-4beta-methyl-5alpha-cholest-7-ene-3beta-ol + 6 Fe(III)-[cytochrome b5] + 4 H2O. The enzyme catalyses 24-methylenecycloartanol + 6 Fe(II)-[cytochrome b5] + 3 O2 + 5 H(+) = 4alpha-carboxy-4beta,14alpha-dimethyl-9beta,19-cyclo-5alpha-ergost-24(24(1))-en-3beta-ol + 6 Fe(III)-[cytochrome b5] + 4 H2O. Non-heme iron oxygenase involved in sterols biosynthesis by catalyzing the removal of the first methyl group at the C-4 position. 4,4-dimethyl-9-beta,19-cyclopropylsterols such as 24-methylenecycloartanol are the preferred substrates. Acts as a rate-limiting enzyme in the sterol pathway via interaction with ACBP1; sterols serve as lipid modulators for gene expression of homeodomain-leucine zipper IV transcription factors. Together with SMO1-1, involved in the maintenance of sterol composition to balance auxin and cytokinin activities during embryogenesis. This Arabidopsis thaliana (Mouse-ear cress) protein is Methylsterol monooxygenase 1-2.